The following is a 423-amino-acid chain: Histidine--tRNA ligase (423 aa).

The protein belongs to the class-II aminoacyl-tRNA synthetase family. As to quaternary structure, homodimer.

The protein resides in the cytoplasm. The catalysed reaction is tRNA(His) + L-histidine + ATP = L-histidyl-tRNA(His) + AMP + diphosphate + H(+). In Phytoplasma mali (strain AT), this protein is Histidine--tRNA ligase.